A 108-amino-acid chain; its full sequence is Large ribosomal subunit protein uL22 (108 aa).

This sequence belongs to the universal ribosomal protein uL22 family. As to quaternary structure, part of the 50S ribosomal subunit.

Functionally, this protein binds specifically to 23S rRNA; its binding is stimulated by other ribosomal proteins, e.g. L4, L17, and L20. It is important during the early stages of 50S assembly. It makes multiple contacts with different domains of the 23S rRNA in the assembled 50S subunit and ribosome. In terms of biological role, the globular domain of the protein is located near the polypeptide exit tunnel on the outside of the subunit, while an extended beta-hairpin is found that lines the wall of the exit tunnel in the center of the 70S ribosome. This chain is Large ribosomal subunit protein uL22, found in Nitratiruptor sp. (strain SB155-2).